Consider the following 111-residue polypeptide: Urease subunit beta (111 aa).

It belongs to the urease beta subunit family. As to quaternary structure, heterotrimer of UreA (gamma), UreB (beta) and UreC (alpha) subunits. Three heterotrimers associate to form the active enzyme.

The protein resides in the cytoplasm. It carries out the reaction urea + 2 H2O + H(+) = hydrogencarbonate + 2 NH4(+). The protein operates within nitrogen metabolism; urea degradation; CO(2) and NH(3) from urea (urease route): step 1/1. In Psychrobacter cryohalolentis (strain ATCC BAA-1226 / DSM 17306 / VKM B-2378 / K5), this protein is Urease subunit beta.